The following is a 224-amino-acid chain: MDGGQQGSFFGLLVIVIPIILLIVFFSKKKGAQKNDFSGEGGNRSSRKDEVWKTIKQFLQEKNERGKEIIKTFVAKKPNPLHSKKDRKLFNQEIQAYITSNNLGKSEAKRYKNEQTRLMQRELYCIYFVTKDAKSTEVDDARIIEAEVYQKPTKTKSTPERLIRILGLKNFETEMQWIQPLMVREEKRKEKEEQKKLKLAARELKKKKKKKIKKPKEIRNQKNV.

The interval Glu203–Val224 is disordered. Positions Leu204–Lys214 are enriched in basic residues. A compositionally biased stretch (basic and acidic residues) spans Pro215–Val224.

This is an uncharacterized protein from Mycoplasma genitalium (strain ATCC 33530 / DSM 19775 / NCTC 10195 / G37) (Mycoplasmoides genitalium).